The sequence spans 216 residues: Adenylate kinase (216 aa).

Residue 10–15 (GAGKGT) coordinates ATP. The interval 30–59 (STGDMLRAAVSAQTEVGKRAKAVMDAGKLV) is NMP. AMP contacts are provided by residues threonine 31, arginine 36, 57–59 (KLV), 85–88 (GFPR), and glutamine 92. An LID region spans residues 126 to 163 (GRYTCANCGTGYHDENLKPKVEGVCDKCGSTHFKRRPD). Arginine 127 provides a ligand contact to ATP. Cysteine 130, cysteine 133, cysteine 150, and cysteine 153 together coordinate Zn(2+). Arginine 160 and arginine 172 together coordinate AMP. Residue alanine 200 coordinates ATP.

It belongs to the adenylate kinase family. In terms of assembly, monomer.

The protein resides in the cytoplasm. The catalysed reaction is AMP + ATP = 2 ADP. It participates in purine metabolism; AMP biosynthesis via salvage pathway; AMP from ADP: step 1/1. Functionally, catalyzes the reversible transfer of the terminal phosphate group between ATP and AMP. Plays an important role in cellular energy homeostasis and in adenine nucleotide metabolism. This chain is Adenylate kinase, found in Allorhizobium ampelinum (strain ATCC BAA-846 / DSM 112012 / S4) (Agrobacterium vitis (strain S4)).